A 129-amino-acid polypeptide reads, in one-letter code: Small ribosomal subunit protein uS11 (129 aa).

It belongs to the universal ribosomal protein uS11 family. Part of the 30S ribosomal subunit. Interacts with proteins S7 and S18. Binds to IF-3.

In terms of biological role, located on the platform of the 30S subunit, it bridges several disparate RNA helices of the 16S rRNA. Forms part of the Shine-Dalgarno cleft in the 70S ribosome. The polypeptide is Small ribosomal subunit protein uS11 (Buchnera aphidicola subsp. Baizongia pistaciae (strain Bp)).